The following is a 333-amino-acid chain: Glycerol-3-phosphate dehydrogenase [NAD(P)+] (333 aa).

3 residues coordinate NADPH: Trp11, Arg30, and Lys105. Sn-glycerol 3-phosphate contacts are provided by Lys105, Gly133, and Ser135. Ala137 contributes to the NADPH binding site. Sn-glycerol 3-phosphate is bound by residues Lys188, Asp241, Ser251, Arg252, and Asn253. The active-site Proton acceptor is the Lys188. Residue Arg252 coordinates NADPH. Residues Val276 and Glu278 each coordinate NADPH.

Belongs to the NAD-dependent glycerol-3-phosphate dehydrogenase family.

The protein localises to the cytoplasm. It catalyses the reaction sn-glycerol 3-phosphate + NAD(+) = dihydroxyacetone phosphate + NADH + H(+). It carries out the reaction sn-glycerol 3-phosphate + NADP(+) = dihydroxyacetone phosphate + NADPH + H(+). Its pathway is membrane lipid metabolism; glycerophospholipid metabolism. Its function is as follows. Catalyzes the reduction of the glycolytic intermediate dihydroxyacetone phosphate (DHAP) to sn-glycerol 3-phosphate (G3P), the key precursor for phospholipid synthesis. This Methylibium petroleiphilum (strain ATCC BAA-1232 / LMG 22953 / PM1) protein is Glycerol-3-phosphate dehydrogenase [NAD(P)+].